The primary structure comprises 91 residues: Long neurotoxin LNTX28 (91 aa).

The signal sequence occupies residues 1–21 (MKTLLLTLVVMTIVCLDLGYT). Intrachain disulfides connect C24–C41, C34–C62, C47–C51, C66–C77, and C78–C83.

Belongs to the three-finger toxin family. Long-chain subfamily. Type II alpha-neurotoxin sub-subfamily. As to expression, expressed by the venom gland.

The protein localises to the secreted. Its function is as follows. Binds with high affinity to muscular (alpha-1/CHRNA1) and neuronal (alpha-7/CHRNA7) nicotinic acetylcholine receptor (nAChR) and inhibits acetylcholine from binding to the receptor, thereby impairing neuromuscular and neuronal transmission. This is Long neurotoxin LNTX28 from Ophiophagus hannah (King cobra).